The sequence spans 281 residues: Pantothenate synthetase (281 aa).

30–37 (MGALHHGH) contacts ATP. H37 serves as the catalytic Proton donor. A (R)-pantoate-binding site is contributed by Q61. Residue Q61 participates in beta-alanine binding. 147–150 (GEKD) provides a ligand contact to ATP. Q153 is a binding site for (R)-pantoate. ATP is bound by residues L176 and 184–187 (SSSR).

This sequence belongs to the pantothenate synthetase family. As to quaternary structure, homodimer.

The protein localises to the cytoplasm. The enzyme catalyses (R)-pantoate + beta-alanine + ATP = (R)-pantothenate + AMP + diphosphate + H(+). It functions in the pathway cofactor biosynthesis; (R)-pantothenate biosynthesis; (R)-pantothenate from (R)-pantoate and beta-alanine: step 1/1. Catalyzes the condensation of pantoate with beta-alanine in an ATP-dependent reaction via a pantoyl-adenylate intermediate. The polypeptide is Pantothenate synthetase (Bartonella bacilliformis (strain ATCC 35685 / KC583 / Herrer 020/F12,63)).